We begin with the raw amino-acid sequence, 67 residues long: Large ribosomal subunit protein bL35 (67 aa).

The interval 1 to 20 (MPKLKTKSGAKKRFVPKKSG) is disordered.

It belongs to the bacterial ribosomal protein bL35 family.

The chain is Large ribosomal subunit protein bL35 from Anaeromyxobacter dehalogenans (strain 2CP-1 / ATCC BAA-258).